A 233-amino-acid polypeptide reads, in one-letter code: Large ribosomal subunit protein uL1 (233 aa).

The protein belongs to the universal ribosomal protein uL1 family. In terms of assembly, part of the 50S ribosomal subunit.

Functionally, binds directly to 23S rRNA. The L1 stalk is quite mobile in the ribosome, and is involved in E site tRNA release. Its function is as follows. Protein L1 is also a translational repressor protein, it controls the translation of the L11 operon by binding to its mRNA. The chain is Large ribosomal subunit protein uL1 from Geotalea uraniireducens (strain Rf4) (Geobacter uraniireducens).